The chain runs to 250 residues: Phosphoribosylaminoimidazole-succinocarboxamide synthase (250 aa).

The protein belongs to the SAICAR synthetase family.

The catalysed reaction is 5-amino-1-(5-phospho-D-ribosyl)imidazole-4-carboxylate + L-aspartate + ATP = (2S)-2-[5-amino-1-(5-phospho-beta-D-ribosyl)imidazole-4-carboxamido]succinate + ADP + phosphate + 2 H(+). Its pathway is purine metabolism; IMP biosynthesis via de novo pathway; 5-amino-1-(5-phospho-D-ribosyl)imidazole-4-carboxamide from 5-amino-1-(5-phospho-D-ribosyl)imidazole-4-carboxylate: step 1/2. This Synechococcus sp. (strain WH7803) protein is Phosphoribosylaminoimidazole-succinocarboxamide synthase.